The primary structure comprises 62 residues: Alpha-conotoxin-like S1.1 (62 aa).

The first 21 residues, 1–21, serve as a signal peptide directing secretion; sequence MGMRMMFTVFLLVVLAITVVS. Residues 22–48 constitute a propeptide that is removed on maturation; that stretch reads FPLDRESDGANAEARTHDHEKHALDRN. 2 disulfide bridges follow: cysteine 50–cysteine 56 and cysteine 51–cysteine 61. Cysteine 61 carries the post-translational modification Cysteine amide.

The protein belongs to the conotoxin A superfamily. In terms of tissue distribution, expressed by the venom duct.

The protein resides in the secreted. Alpha-conotoxins act on postsynaptic membranes, they bind to the nicotinic acetylcholine receptors (nAChR) and thus inhibit them. The polypeptide is Alpha-conotoxin-like S1.1 (Conus striatus (Striated cone)).